Here is a 231-residue protein sequence, read N- to C-terminus: Uracil-DNA glycosylase (231 aa).

The active-site Proton acceptor is the D74.

Belongs to the uracil-DNA glycosylase (UDG) superfamily. UNG family.

The protein localises to the cytoplasm. It carries out the reaction Hydrolyzes single-stranded DNA or mismatched double-stranded DNA and polynucleotides, releasing free uracil.. Its function is as follows. Excises uracil residues from the DNA which can arise as a result of misincorporation of dUMP residues by DNA polymerase or due to deamination of cytosine. In Campylobacter jejuni subsp. jejuni serotype O:2 (strain ATCC 700819 / NCTC 11168), this protein is Uracil-DNA glycosylase.